Here is a 171-residue protein sequence, read N- to C-terminus: Crossover junction endodeoxyribonuclease RuvC (171 aa).

Residues aspartate 12, glutamate 72, and aspartate 144 contribute to the active site. Mg(2+) contacts are provided by aspartate 12, glutamate 72, and aspartate 144.

The protein belongs to the RuvC family. In terms of assembly, homodimer which binds Holliday junction (HJ) DNA. The HJ becomes 2-fold symmetrical on binding to RuvC with unstacked arms; it has a different conformation from HJ DNA in complex with RuvA. In the full resolvosome a probable DNA-RuvA(4)-RuvB(12)-RuvC(2) complex forms which resolves the HJ. It depends on Mg(2+) as a cofactor.

It is found in the cytoplasm. The catalysed reaction is Endonucleolytic cleavage at a junction such as a reciprocal single-stranded crossover between two homologous DNA duplexes (Holliday junction).. The RuvA-RuvB-RuvC complex processes Holliday junction (HJ) DNA during genetic recombination and DNA repair. Endonuclease that resolves HJ intermediates. Cleaves cruciform DNA by making single-stranded nicks across the HJ at symmetrical positions within the homologous arms, yielding a 5'-phosphate and a 3'-hydroxyl group; requires a central core of homology in the junction. The consensus cleavage sequence is 5'-(A/T)TT(C/G)-3'. Cleavage occurs on the 3'-side of the TT dinucleotide at the point of strand exchange. HJ branch migration catalyzed by RuvA-RuvB allows RuvC to scan DNA until it finds its consensus sequence, where it cleaves and resolves the cruciform DNA. The protein is Crossover junction endodeoxyribonuclease RuvC of Afipia carboxidovorans (strain ATCC 49405 / DSM 1227 / KCTC 32145 / OM5) (Oligotropha carboxidovorans).